The primary structure comprises 121 residues: uncharacterized protein (121 aa).

An N-terminal signal peptide occupies residues 1-23 (MNFSTVFQAIIAVLGLTTVTALA). Residues N68 and N84 are each glycosylated (N-linked (GlcNAc...) asparagine).

Post-translationally, N-glycosylated.

This is an uncharacterized protein from Saccharomyces cerevisiae (strain ATCC 204508 / S288c) (Baker's yeast).